The sequence spans 880 residues: Probable potassium channel AKT5 (880 aa).

The Cytoplasmic portion of the chain corresponds to 1–82; the sequence is MGIEKRKKMV…PFDPRYRAWD (82 aa). A helical transmembrane segment spans residues 83–103; the sequence is WFLVILVLYTAWASPFEFGFL. The Extracellular portion of the chain corresponds to 104 to 111; it reads QTPRAPLS. The chain crosses the membrane as a helical span at residues 112-132; that stretch reads ILDNVVNGFFAVDIVLTFFVA. Residues 133 to 153 lie on the Cytoplasmic side of the membrane; the sequence is FLDKATYLLVDDPKRIAWRYT. A helical transmembrane segment spans residues 154–174; that stretch reads STWLIFDVVSTVPYELFGSLL. The Extracellular portion of the chain corresponds to 175–182; sequence HNTIQGYG. The helical; Voltage-sensor transmembrane segment at 183–203 threads the bilayer; the sequence is IFSMLRLWRLHRVSKCFARLE. At 204-217 the chain is on the cytoplasmic side; sequence KDRKYNYFWIRCTK. The helical transmembrane segment at 218–238 threads the bilayer; sequence LLLVSLFVVHCGACFCYSIAA. The Extracellular segment spans residues 239 to 265; the sequence is HYPDPSMTFMALAEANWKQKSLLIRYV. Positions 266 to 285 form an intramembrane region, pore-forming; that stretch reads TAMYWSITTFSTTGYGDIHG. Residues 286–291 are Extracellular-facing; that stretch reads NNAEER. Residues 292–312 form a helical membrane-spanning segment; sequence AFILFYMIFNLGLLAYIIGNM. The Cytoplasmic segment spans residues 313–880; it reads TNLVVHVTSR…GDFLLLLKVS (568 aa). Residue 396–517 participates in a nucleoside 3',5'-cyclic phosphate binding; it reads LFHGISNDLL…IMNNLLQHLK (122 aa). ANK repeat units follow at residues 541–570, 574–603, 607–636, 637–667, and 671–700; these read DLPLSLCFAAARGDDLLLHQLLKRGSNPNE, NGRTALHIAASKGSQYCVVLLLEHGADPNI, EGSVPLWEAIIGRHEENAKLLSENGATLSF, DTVGYFSCLAVGQNNLNALKDIVKYGGDISL, and NGTTALHRAVSEGNLEIVQFLLEKGADMDK. The KHA domain occupies 809-880; the sequence is VGGVYPARVT…GDFLLLLKVS (72 aa).

This sequence belongs to the potassium channel family. Plant (TC 1.A.1.4) subfamily. The potassium channel is probably composed of a homo- or heterotetrameric complex of pore-forming subunits. In terms of tissue distribution, predominantly expressed in flowers.

It localises to the membrane. In terms of biological role, probable potassium channel. May interact with the cytoskeleton or with regulatory proteins. This Arabidopsis thaliana (Mouse-ear cress) protein is Probable potassium channel AKT5 (AKT5).